Reading from the N-terminus, the 97-residue chain is Large ribosomal subunit protein uL23 (97 aa).

This sequence belongs to the universal ribosomal protein uL23 family. Part of the 50S ribosomal subunit. Contacts protein L29, and trigger factor when it is bound to the ribosome.

In terms of biological role, one of the early assembly proteins it binds 23S rRNA. One of the proteins that surrounds the polypeptide exit tunnel on the outside of the ribosome. Forms the main docking site for trigger factor binding to the ribosome. In Anaeromyxobacter dehalogenans (strain 2CP-1 / ATCC BAA-258), this protein is Large ribosomal subunit protein uL23.